The primary structure comprises 89 residues: Large ribosomal subunit protein bL27 (89 aa).

The tract at residues 1–24 (MAHKKAGGSSRNGRDSAGRRLGVK) is disordered.

Belongs to the bacterial ribosomal protein bL27 family.

This Maricaulis maris (strain MCS10) (Caulobacter maris) protein is Large ribosomal subunit protein bL27.